A 151-amino-acid chain; its full sequence is Putative pre-16S rRNA nuclease (151 aa).

Belongs to the YqgF nuclease family.

Its subcellular location is the cytoplasm. Could be a nuclease involved in processing of the 5'-end of pre-16S rRNA. This is Putative pre-16S rRNA nuclease from Chlamydia pneumoniae (Chlamydophila pneumoniae).